Here is a 238-residue protein sequence, read N- to C-terminus: Nucleoside diphosphate kinase III, chloroplastic/mitochondrial (238 aa).

Residues 1–85 (MSSQICRSAS…YMIQDQEVLA (85 aa)) constitute a chloroplast and mitochondrion transit peptide. Positions 96, 144, 172, 178, 189, and 199 each coordinate ATP. H202 functions as the Pros-phosphohistidine intermediate in the catalytic mechanism.

The protein belongs to the NDK family. As to quaternary structure, homohexamer. It depends on Mg(2+) as a cofactor.

The protein resides in the plastid. The protein localises to the chloroplast thylakoid lumen. It is found in the mitochondrion intermembrane space. The catalysed reaction is a 2'-deoxyribonucleoside 5'-diphosphate + ATP = a 2'-deoxyribonucleoside 5'-triphosphate + ADP. It catalyses the reaction a ribonucleoside 5'-diphosphate + ATP = a ribonucleoside 5'-triphosphate + ADP. In terms of biological role, major role in the synthesis of nucleoside triphosphates other than ATP. The ATP gamma phosphate is transferred to the NDP beta phosphate via a ping-pong mechanism, using a phosphorylated active-site intermediate. Shows the highest specificity towards GDP. The sequence is that of Nucleoside diphosphate kinase III, chloroplastic/mitochondrial (NDPK3) from Arabidopsis thaliana (Mouse-ear cress).